The primary structure comprises 86 residues: Exodeoxyribonuclease 7 small subunit (86 aa).

It belongs to the XseB family. In terms of assembly, heterooligomer composed of large and small subunits.

It is found in the cytoplasm. It carries out the reaction Exonucleolytic cleavage in either 5'- to 3'- or 3'- to 5'-direction to yield nucleoside 5'-phosphates.. Its function is as follows. Bidirectionally degrades single-stranded DNA into large acid-insoluble oligonucleotides, which are then degraded further into small acid-soluble oligonucleotides. This is Exodeoxyribonuclease 7 small subunit from Xanthomonas euvesicatoria pv. vesicatoria (strain 85-10) (Xanthomonas campestris pv. vesicatoria).